The following is a 329-amino-acid chain: Tyrosine--tRNA ligase (329 aa).

The L-tyrosine site is built by Tyr-31, Tyr-157, Gln-161, Asp-164, and Gln-179. The 'KMSKS' region signature appears at 220-224 (KMSKS). Lys-223 is an ATP binding site.

This sequence belongs to the class-I aminoacyl-tRNA synthetase family. TyrS type 4 subfamily. Homodimer.

It is found in the cytoplasm. It catalyses the reaction tRNA(Tyr) + L-tyrosine + ATP = L-tyrosyl-tRNA(Tyr) + AMP + diphosphate + H(+). Functionally, catalyzes the attachment of tyrosine to tRNA(Tyr) in a two-step reaction: tyrosine is first activated by ATP to form Tyr-AMP and then transferred to the acceptor end of tRNA(Tyr). The polypeptide is Tyrosine--tRNA ligase (Picrophilus torridus (strain ATCC 700027 / DSM 9790 / JCM 10055 / NBRC 100828 / KAW 2/3)).